The following is a 277-amino-acid chain: F420-dependent methylenetetrahydromethanopterin dehydrogenase (277 aa).

It belongs to the MTD family.

It catalyses the reaction 5,10-methylenetetrahydromethanopterin + oxidized coenzyme F420-(gamma-L-Glu)(n) + 2 H(+) = 5,10-methenyl-5,6,7,8-tetrahydromethanopterin + reduced coenzyme F420-(gamma-L-Glu)(n). It participates in one-carbon metabolism; methanogenesis from CO(2); 5,10-methylene-5,6,7,8-tetrahydromethanopterin from 5,10-methenyl-5,6,7,8-tetrahydromethanopterin (coenzyme F420 route): step 1/1. Catalyzes the reversible reduction of methenyl-H(4)MPT(+) to methylene-H(4)MPT. The chain is F420-dependent methylenetetrahydromethanopterin dehydrogenase from Methanococcus maripaludis (strain C5 / ATCC BAA-1333).